A 270-amino-acid chain; its full sequence is Undecaprenyl-diphosphatase (270 aa).

The next 7 membrane-spanning stretches (helical) occupy residues 1 to 21, 92 to 112, 119 to 139, 150 to 170, 193 to 213, 223 to 243, and 250 to 270; these read MTWW…FIPV, FRLG…YVLF, AFGS…LLLL, LSGV…VPGI, FSFL…GLEL, LSLG…IYVV, and GNLQ…LWLL.

Belongs to the UppP family.

The protein localises to the cell inner membrane. The enzyme catalyses di-trans,octa-cis-undecaprenyl diphosphate + H2O = di-trans,octa-cis-undecaprenyl phosphate + phosphate + H(+). Functionally, catalyzes the dephosphorylation of undecaprenyl diphosphate (UPP). Confers resistance to bacitracin. The chain is Undecaprenyl-diphosphatase from Salinibacter ruber (strain DSM 13855 / M31).